The chain runs to 638 residues: Chaperone protein DnaK (638 aa).

Thr198 bears the Phosphothreonine; by autocatalysis mark. A compositionally biased stretch (low complexity) spans Gln603–Gln618. The segment at Gln603–Lys638 is disordered. Over residues Asp624 to Lys638 the composition is skewed to acidic residues.

Belongs to the heat shock protein 70 family.

Its function is as follows. Acts as a chaperone. The chain is Chaperone protein DnaK from Vibrio campbellii (strain ATCC BAA-1116).